Consider the following 550-residue polypeptide: Glucose-6-phosphate isomerase (550 aa).

The Proton donor role is filled by glutamate 356. Active-site residues include histidine 387 and lysine 515.

Belongs to the GPI family.

The protein resides in the cytoplasm. It catalyses the reaction alpha-D-glucose 6-phosphate = beta-D-fructose 6-phosphate. It functions in the pathway carbohydrate biosynthesis; gluconeogenesis. Its pathway is carbohydrate degradation; glycolysis; D-glyceraldehyde 3-phosphate and glycerone phosphate from D-glucose: step 2/4. In terms of biological role, catalyzes the reversible isomerization of glucose-6-phosphate to fructose-6-phosphate. In Vibrio parahaemolyticus serotype O3:K6 (strain RIMD 2210633), this protein is Glucose-6-phosphate isomerase.